Reading from the N-terminus, the 301-residue chain is Acetylglutamate kinase (301 aa).

Residues 76–77 (GG), Arg98, and Asn192 contribute to the substrate site.

It belongs to the acetylglutamate kinase family. ArgB subfamily.

It localises to the cytoplasm. The catalysed reaction is N-acetyl-L-glutamate + ATP = N-acetyl-L-glutamyl 5-phosphate + ADP. It functions in the pathway amino-acid biosynthesis; L-arginine biosynthesis; N(2)-acetyl-L-ornithine from L-glutamate: step 2/4. Catalyzes the ATP-dependent phosphorylation of N-acetyl-L-glutamate. The protein is Acetylglutamate kinase of Chlorobaculum parvum (strain DSM 263 / NCIMB 8327) (Chlorobium vibrioforme subsp. thiosulfatophilum).